Reading from the N-terminus, the 473-residue chain is Trehalose-6-phosphate synthase (473 aa).

D-glucose 6-phosphate is bound at residue arginine 10. Glycine 21 to glycine 22 lines the UDP-alpha-D-glucose pocket. Tyrosine 76 and aspartate 130 together coordinate D-glucose 6-phosphate. UDP-alpha-D-glucose contacts are provided by arginine 262 and lysine 267. Arginine 300 provides a ligand contact to D-glucose 6-phosphate. Residues phenylalanine 339 and leucine 365–glutamate 369 contribute to the UDP-alpha-D-glucose site.

The protein belongs to the glycosyltransferase 20 family. Homotetramer.

It carries out the reaction D-glucose 6-phosphate + UDP-alpha-D-glucose = alpha,alpha-trehalose 6-phosphate + UDP + H(+). Its pathway is glycan biosynthesis; trehalose biosynthesis. Its function is as follows. Probably involved in the osmoprotection via the biosynthesis of trehalose. Catalyzes the transfer of glucose from UDP-alpha-D-glucose (UDP-Glc) to D-glucose 6-phosphate (Glc-6-P) to form trehalose-6-phosphate. Acts with retention of the anomeric configuration of the UDP-sugar donor. This Salmonella arizonae (strain ATCC BAA-731 / CDC346-86 / RSK2980) protein is Trehalose-6-phosphate synthase (otsA).